The following is a 315-amino-acid chain: Acetyl-coenzyme A carboxylase carboxyl transferase subunit alpha (315 aa).

The CoA carboxyltransferase C-terminal domain maps to 35-289 (KLSKKRFELM…RKAVAAELKI (255 aa)).

Belongs to the AccA family. As to quaternary structure, acetyl-CoA carboxylase is a heterohexamer composed of biotin carboxyl carrier protein (AccB), biotin carboxylase (AccC) and two subunits each of ACCase subunit alpha (AccA) and ACCase subunit beta (AccD).

Its subcellular location is the cytoplasm. The enzyme catalyses N(6)-carboxybiotinyl-L-lysyl-[protein] + acetyl-CoA = N(6)-biotinyl-L-lysyl-[protein] + malonyl-CoA. The protein operates within lipid metabolism; malonyl-CoA biosynthesis; malonyl-CoA from acetyl-CoA: step 1/1. Functionally, component of the acetyl coenzyme A carboxylase (ACC) complex. First, biotin carboxylase catalyzes the carboxylation of biotin on its carrier protein (BCCP) and then the CO(2) group is transferred by the carboxyltransferase to acetyl-CoA to form malonyl-CoA. This chain is Acetyl-coenzyme A carboxylase carboxyl transferase subunit alpha, found in Francisella tularensis subsp. mediasiatica (strain FSC147).